The primary structure comprises 130 residues: L-ectoine synthase (130 aa).

This sequence belongs to the ectoine synthase family.

It catalyses the reaction (2S)-4-acetamido-2-aminobutanoate = L-ectoine + H2O. Its pathway is amine and polyamine biosynthesis; ectoine biosynthesis; L-ectoine from L-aspartate 4-semialdehyde: step 3/3. Catalyzes the circularization of gamma-N-acetyl-alpha,gamma-diaminobutyric acid (ADABA) to ectoine (1,4,5,6-tetrahydro-2-methyl-4-pyrimidine carboxylic acid), which is an excellent osmoprotectant. In Mycolicibacterium gilvum (strain PYR-GCK) (Mycobacterium gilvum (strain PYR-GCK)), this protein is L-ectoine synthase.